An 89-amino-acid chain; its full sequence is Small ribosomal subunit protein uS15 (89 aa).

A disordered region spans residues 1–24 (MSLNAEQKSEIVEQFRRSPSDTGS). The span at 7–19 (QKSEIVEQFRRSP) shows a compositional bias: basic and acidic residues.

The protein belongs to the universal ribosomal protein uS15 family. Part of the 30S ribosomal subunit. Forms a bridge to the 50S subunit in the 70S ribosome, contacting the 23S rRNA.

In terms of biological role, one of the primary rRNA binding proteins, it binds directly to 16S rRNA where it helps nucleate assembly of the platform of the 30S subunit by binding and bridging several RNA helices of the 16S rRNA. Functionally, forms an intersubunit bridge (bridge B4) with the 23S rRNA of the 50S subunit in the ribosome. This Halorhodospira halophila (strain DSM 244 / SL1) (Ectothiorhodospira halophila (strain DSM 244 / SL1)) protein is Small ribosomal subunit protein uS15.